The primary structure comprises 575 residues: Reverse gyrse subunit B (575 aa).

The RG N-terminal-type; degenerate zinc-finger motif lies at 1–39; sequence MKIYYNNVCPNCSGRISNERLIKGLPCENDYPYEEGTIE. Residues glutamine 83 and 100–107 contribute to the ATP site; that span reads APTGMGKT. The 161-residue stretch at 87 to 247 folds into the Helicase ATP-binding domain; it reads FIRAYKGYSF…KLKISGKDLE (161 aa). The DEAD box motif lies at 204-207; the sequence is DDVD. In terms of domain architecture, Helicase C-terminal spans 316-465; sequence QTLELIKKLG…ALKMVEEAIE (150 aa).

It belongs to the DEAD box helicase family. DDVD subfamily. As to quaternary structure, heterodimer of an RgyA and RgyB subunit.

The protein resides in the cytoplasm. It catalyses the reaction ATP + H2O = ADP + phosphate + H(+). Its function is as follows. Modifies the topological state of DNA by introducing positive supercoils in an ATP-dependent process. Binds to single-stranded DNA, transiently cleaves and then rejoins the end, introducing a positive supercoil in the process. The scissile phosphodiester is attacked by the catalytic tyrosine of the enzyme, resulting in the formation of a DNA-(5'-phosphotyrosyl)-enzyme intermediate. Probably involved in rewinding DNA strands in regions of the chromosome that have opened up to allow replication, transcription, DNA repair or for DNA protection. Reconstituted holoenzyme binds dsDNA a bit better than ssDNA, this subunit preferentially binds dsDNA. In isolation this subunit has DNA-stimulated ATPase activity that is stimulated by topoisomerase-domain containing RgyA. This subunit inhibits the relaxation activity of the topoisomerase subunit while promoting positive supercoiling. This is Reverse gyrse subunit B from Nanoarchaeum equitans (strain Kin4-M).